Reading from the N-terminus, the 1131-residue chain is MASGSRTKHSYHNSSQGQAQSSGTSNMNYKDSISKAIAQYTADARLHAVFEQSGESGKSFDYSQSVKTTTQSVPERQITAYLTKIQRGGHIQPFGCMIAVDEASFRIIAYSENACEMLSLTPQSVPSLDKSEILTVGTDVRTLFTPSSSVLLERAFGAREITLLNPIWIHSKNSGKPFYAILHRVDVGIVIDLEPARTEDPALSIAGAVQSQKLAVRAISHLQSLPGGDIKLLCDTVVESVRELTGYDRVMVYKFHEDEHGEVVAESKRSDLEPYIGLHYPATDIPQASRFLFKQNRVRMIVDCHATPVRVTQDESLMQPLCLVGSTLRAPHGCHAQYMANMGSIASLTLAVIINGNDEEAVGGGRNSMRLWGLVVGHHTSVRSIPFPLRYACEFLMQAFGLQLNMELQLASQLSEKHVLRTQTLLCDMLLRDSPPGIVTQSPSIMDLVKCDGAALYYQRKYYPLGVTPTEAQIKDIVEWLLAYHGDSTGLSTDSLADAGYPGAASLGDAVCGMAVAYITSKDFLFWFRSHTAKEIKWGGAKHHPEDKDDGQRMHPRSSFKAFLEVVKSRSSPWENAEMDAIHSLQLILRDSFKDAEASNSKAIVHALGEMELQGIDELSSVAREMVRLIETATAPIFGVDVNGRINGWNEKVVELTGLSAEEAKGKSLVHDLLYKESQESAEKLLYNALRGVEGKNVEIKLRTFGAEQVEKAVFLVVNACSSRDYTNSIVGVSFVGQDVTGEKIVMDKFIHIQGDYKAIVHSPNPLIPPIFASDENTSCSEWNTAMEKLSGWSREEIVGKMLVGEIFGSCCRLKGPDAMTKFMIVLHNAIGGQDTDKFPFSFFDRNGKYVQALLTANKRVNMEGDTIGAFCFIQIASPELQQALRVQRQQEKKCYSQMKELAYICQEVKSPLNGIRFTNSLLEATNLTEYQKQYLETSAACERQMSKIIRDVDLENIEDGSLTLEKEDFFLGSVIDAVVSQVMLLLREKGVQLIRDIPEEIKTLTVHGDQVRIQQVLADFLLNMVRYAPSPDGWVEIQLRPSMMPISDGATVVHIELRIICPGEGLPPELVQDMFHSSRWVTQEGLGLSMCRKMLKLMNGEIQYIRESERCYFMIILDLPMTRKGPKSVG.

Residues 1-11 show a composition bias toward basic residues; sequence MASGSRTKHSY. The disordered stretch occupies residues 1 to 26; it reads MASGSRTKHSYHNSSQGQAQSSGTSN. Over residues 14-25 the composition is skewed to low complexity; that stretch reads SSQGQAQSSGTS. Residues 229–408 form the GAF domain; the sequence is DIKLLCDTVV…AFGLQLNMEL (180 aa). Position 334 (cysteine 334) interacts with phytochromobilin. PAS domains lie at 622–693 and 756–808; these read VARE…LRGV and DYKA…GEIF. The Histidine kinase domain occupies 904–1124; that stretch reads YICQEVKSPL…MIILDLPMTR (221 aa).

Belongs to the phytochrome family. Homodimer. Post-translationally, contains one covalently linked phytochromobilin chromophore.

In terms of biological role, regulatory photoreceptor which exists in two forms that are reversibly interconvertible by light: the Pr form that absorbs maximally in the red region of the spectrum and the Pfr form that absorbs maximally in the far-red region. Photoconversion of Pr to Pfr induces an array of morphogenic responses, whereas reconversion of Pfr to Pr cancels the induction of those responses. Pfr controls the expression of a number of nuclear genes including those encoding the small subunit of ribulose-bisphosphate carboxylase, chlorophyll A/B binding protein, protochlorophyllide reductase, rRNA, etc. It also controls the expression of its own gene(s) in a negative feedback fashion. This Solanum lycopersicum (Tomato) protein is Phytochrome B1.